The primary structure comprises 122 residues: Large ribosomal subunit protein bL12 (122 aa).

Belongs to the bacterial ribosomal protein bL12 family. Homodimer. Part of the ribosomal stalk of the 50S ribosomal subunit. Forms a multimeric L10(L12)X complex, where L10 forms an elongated spine to which 2 to 4 L12 dimers bind in a sequential fashion. Binds GTP-bound translation factors.

Its function is as follows. Forms part of the ribosomal stalk which helps the ribosome interact with GTP-bound translation factors. Is thus essential for accurate translation. This chain is Large ribosomal subunit protein bL12, found in Streptococcus thermophilus (strain ATCC BAA-491 / LMD-9).